Reading from the N-terminus, the 711-residue chain is Ribosomal RNA large subunit methyltransferase K/L (711 aa).

Residues 42–153 (DAQRAVLWSR…KGRATISVDL (112 aa)) form the THUMP domain.

The protein belongs to the methyltransferase superfamily. RlmKL family.

Its subcellular location is the cytoplasm. It carries out the reaction guanosine(2445) in 23S rRNA + S-adenosyl-L-methionine = N(2)-methylguanosine(2445) in 23S rRNA + S-adenosyl-L-homocysteine + H(+). The enzyme catalyses guanosine(2069) in 23S rRNA + S-adenosyl-L-methionine = N(2)-methylguanosine(2069) in 23S rRNA + S-adenosyl-L-homocysteine + H(+). Its function is as follows. Specifically methylates the guanine in position 2445 (m2G2445) and the guanine in position 2069 (m7G2069) of 23S rRNA. This is Ribosomal RNA large subunit methyltransferase K/L from Xanthomonas campestris pv. campestris (strain 8004).